A 1978-amino-acid polypeptide reads, in one-letter code: Dedicator of cytokinesis protein 4 (1978 aa).

The 62-residue stretch at Glu-6–Ala-67 folds into the SH3 domain. Phosphotyrosine is present on Tyr-167. Thr-193 bears the Phosphothreonine mark. The 174-residue stretch at Arg-401 to Cys-574 folds into the C2 DOCK-type domain. The region spanning Lys-1199 to Ile-1605 is the DOCKER domain. Phosphoserine is present on residues Ser-1608, Ser-1616, Ser-1623, Ser-1627, Ser-1629, and Ser-1640. Disordered stretches follow at residues Ser-1657–Thr-1738 and Ile-1751–Leu-1978. Over residues Pro-1681 to Leu-1712 the composition is skewed to low complexity. The residue at position 1778 (Ser-1778) is a Phosphoserine. The short motif at Pro-1797 to Pro-1803 is the SH3-binding element. The span at Thr-1804–Pro-1818 shows a compositional bias: polar residues. Residues Ser-1842 to Ser-1872 show a composition bias toward low complexity. Residues Gly-1873 to Ser-1882 show a composition bias toward polar residues. Residues Val-1885–Val-1895 show a composition bias toward pro residues. A compositionally biased stretch (basic and acidic residues) spans Ser-1953 to Pro-1966.

This sequence belongs to the DOCK family. As to quaternary structure, interacts with nucleotide-free Rap1; functions as a guanine nucleotide exchange factor (GEF) for Rap1. Interacts (via DOCKER domain) with RAC1; functions as a guanine nucleotide exchange factor (GEF) for RAC1. Interacts with the SH3 domain of CRK. Interacts with FASLG. Interacts with ELMO2 and EPHA2; mediates activation of RAC1 by EPHA2. Interacts with USH1C (via PDZ 1 domain). Expressed in inner ear (at protein level).

Its subcellular location is the cell membrane. The protein localises to the cytoplasm. It is found in the cytosol. Its function is as follows. Functions as a guanine nucleotide exchange factor (GEF) that promotes the exchange of GDP to GTP, converting inactive GDP-bound small GTPases into their active GTP-bound form. Involved in regulation of adherens junction between cells. Plays a role in cell migration. In terms of biological role, has a higher guanine nucleotide exchange factor activity compared to other isoforms. This Mus musculus (Mouse) protein is Dedicator of cytokinesis protein 4 (Dock4).